The following is a 208-amino-acid chain: Uracil phosphoribosyltransferase (208 aa).

5-phospho-alpha-D-ribose 1-diphosphate-binding positions include Arg-78, Arg-103, and 130 to 138 (DPMLATGGS). Uracil is bound by residues Ile-193 and 198-200 (GDA). Position 199 (Asp-199) interacts with 5-phospho-alpha-D-ribose 1-diphosphate.

Belongs to the UPRTase family. Requires Mg(2+) as cofactor.

The enzyme catalyses UMP + diphosphate = 5-phospho-alpha-D-ribose 1-diphosphate + uracil. The protein operates within pyrimidine metabolism; UMP biosynthesis via salvage pathway; UMP from uracil: step 1/1. Its activity is regulated as follows. Allosterically activated by GTP. Functionally, catalyzes the conversion of uracil and 5-phospho-alpha-D-ribose 1-diphosphate (PRPP) to UMP and diphosphate. This chain is Uracil phosphoribosyltransferase, found in Yersinia enterocolitica serotype O:8 / biotype 1B (strain NCTC 13174 / 8081).